We begin with the raw amino-acid sequence, 513 residues long: ATP synthase subunit alpha (513 aa).

Residue 169–176 (GDRQTGKT) coordinates ATP.

The protein belongs to the ATPase alpha/beta chains family. In terms of assembly, F-type ATPases have 2 components, CF(1) - the catalytic core - and CF(0) - the membrane proton channel. CF(1) has five subunits: alpha(3), beta(3), gamma(1), delta(1), epsilon(1). CF(0) has three main subunits: a(1), b(2) and c(9-12). The alpha and beta chains form an alternating ring which encloses part of the gamma chain. CF(1) is attached to CF(0) by a central stalk formed by the gamma and epsilon chains, while a peripheral stalk is formed by the delta and b chains.

It is found in the cell inner membrane. It catalyses the reaction ATP + H2O + 4 H(+)(in) = ADP + phosphate + 5 H(+)(out). Produces ATP from ADP in the presence of a proton gradient across the membrane. The alpha chain is a regulatory subunit. This Salmonella agona (strain SL483) protein is ATP synthase subunit alpha.